Reading from the N-terminus, the 835-residue chain is Phenylalanine--tRNA ligase beta subunit (835 aa).

Positions 44–160 constitute a tRNA-binding domain; sequence PATTGPLVLG…ESGQPGDDAR (117 aa). The B5 domain occupies 419–494; the sequence is PTMPSITMPV…RLEGLEAIPT (76 aa). Mg(2+) contacts are provided by Asp-472, Asp-478, Glu-481, and Glu-482. The 94-residue stretch at 741 to 834 folds into the FDX-ACB domain; that stretch reads SAFPALHQDI…AKERLGAEMR (94 aa).

Belongs to the phenylalanyl-tRNA synthetase beta subunit family. Type 1 subfamily. As to quaternary structure, tetramer of two alpha and two beta subunits. Mg(2+) serves as cofactor.

The protein localises to the cytoplasm. The enzyme catalyses tRNA(Phe) + L-phenylalanine + ATP = L-phenylalanyl-tRNA(Phe) + AMP + diphosphate + H(+). In Corynebacterium efficiens (strain DSM 44549 / YS-314 / AJ 12310 / JCM 11189 / NBRC 100395), this protein is Phenylalanine--tRNA ligase beta subunit.